Here is a 184-residue protein sequence, read N- to C-terminus: Ethylene-responsive transcription factor ERF010 (184 aa).

The segment at residues 20–77 is a DNA-binding region (AP2/ERF); that stretch reads PYKGIRMRKWGKWVAEIREPNKRSRLWLGSYSTPEAAARAYDTAVFYLRGPTARLNFP. The disordered stretch occupies residues 123-184; it reads QNRDSDVDNK…SSDEEWESKH (62 aa). Basic and acidic residues predominate over residues 161 to 172; that stretch reads LLDRVDLNKLPD. A compositionally biased stretch (acidic residues) spans 174–184; that stretch reads ESSDEEWESKH.

This sequence belongs to the AP2/ERF transcription factor family. ERF subfamily.

It is found in the nucleus. Its function is as follows. Probably acts as a transcriptional activator. Binds to the GCC-box pathogenesis-related promoter element. May be involved in the regulation of gene expression by stress factors and by components of stress signal transduction pathways. This is Ethylene-responsive transcription factor ERF010 (ERF010) from Arabidopsis thaliana (Mouse-ear cress).